A 256-amino-acid polypeptide reads, in one-letter code: Ribosomal RNA small subunit methyltransferase J (256 aa).

Residues 104-105, 120-121, 156-157, and Asp174 contribute to the S-adenosyl-L-methionine site; these read RD, ER, and SS.

This sequence belongs to the methyltransferase superfamily. RsmJ family.

The protein resides in the cytoplasm. The enzyme catalyses guanosine(1516) in 16S rRNA + S-adenosyl-L-methionine = N(2)-methylguanosine(1516) in 16S rRNA + S-adenosyl-L-homocysteine + H(+). Specifically methylates the guanosine in position 1516 of 16S rRNA. This is Ribosomal RNA small subunit methyltransferase J from Yersinia pseudotuberculosis serotype O:1b (strain IP 31758).